The following is a 162-amino-acid chain: Transcription elongation factor GreA (162 aa).

A coiled-coil region spans residues 1–28; the sequence is MQKEPMLEETYRKLSEELEQLKSVERGV.

Belongs to the GreA/GreB family.

Necessary for efficient RNA polymerase transcription elongation past template-encoded arresting sites. The arresting sites in DNA have the property of trapping a certain fraction of elongating RNA polymerases that pass through, resulting in locked ternary complexes. Cleavage of the nascent transcript by cleavage factors such as GreA or GreB allows the resumption of elongation from the new 3'terminus. GreA releases sequences of 2 to 3 nucleotides. The chain is Transcription elongation factor GreA from Sulfurovum sp. (strain NBC37-1).